The chain runs to 238 residues: Large ribosomal subunit protein uL1 (238 aa).

This sequence belongs to the universal ribosomal protein uL1 family. Part of the 50S ribosomal subunit.

In terms of biological role, binds directly to 23S rRNA. The L1 stalk is quite mobile in the ribosome, and is involved in E site tRNA release. Protein L1 is also a translational repressor protein, it controls the translation of the L11 operon by binding to its mRNA. This is Large ribosomal subunit protein uL1 from Frankia casuarinae (strain DSM 45818 / CECT 9043 / HFP020203 / CcI3).